The primary structure comprises 2528 residues: MTVRDSKTGGITPIAVVGMSFRGPGDATNVEKLLNMISEGRESRAEVQAKKWDPEGFYHPDSSRHGTHNVEYGHWFQQDVYNFDAPFFNVSPAEAAALDPQQRMLLECSYEAFENSGTPMSKIVGTDTSVFVSSFATDYTDMLWRDPESVPMYQCTNSGFSRSNLANRISYSFDLKGPSVLVDTACSGGLTALHLACQSLLVGDVRQALAAGSSLILGPEMMVTMSMMKFLSPDGRCYAFDERANGYARGEGVAVLLLKRLEDALADNDTIRAVIRGTGCNQDGKTPGITMPNSVSQEALIRSVYKKAALDPLDTTYVECHGTGTQAGDTTEASALSKVFSPGRRLPLLIGSVKTNIGHLEGASGLAGVVKSILMLEQGVILPNRNFERPNTKIPLEKWNLRVPTTLECWNNVKTRRVSINSFGYGGANVHAILESATDFLRDNSMGTDSTRFASRRSVVVGNVGQTKPAVSLVQDMSSNDRSHEDPTPLLFALSAFDSSAGDAWARSLSIYLSQRQGSDEKTILSSLAYTLSDRRTWHPWKAALSATTIQELITKLEKVRFVNMAPRHNIGFVFTGQGAQWCGMGRELISIFPRFRQSLIACDIALQSFGADFHVIDELEADVESSRINKALYSQPLCTALQIALVDLLVSWGIYAQSVTGHSSGEIAAAYAAGALSLSDAMLVAYARGCATANLAKKGAKGAMAAVSMETQELSHILSALENGKVGIACFNSPTSCTVSGDKSALDELQDVLRQKGVYNRRLIVDVAYHSHHMELIADSYRSAISSIQPLPGSDVKFFSSVTGELLDKNKLGVDYWVSNLVGQVKFAQSLSSLVSSHHGTGTPQIQALIEIGPHAALGGPISQVIDSEPLANPTGYFSALVRKKNAVTTILSLAADLFLSGYPIQLSAVNQNCNSRHTPLVDLPSYSWNHSKAYTAESRISKTYRQRRYPRLDLIGVFDVHSSVLEPRWRQVIRLSELPWLQDHKIQSSILYPVAGYIAMAIEAATQRNQMREMGNDILGYQFRDVAISSALTIPDMPGQVEVFITLRSFSESVRSPSNLWDEFSISSVNDENRWTEHCRGLISVLKSSKLSNLVNGKMQDASTIACQHDLREVFATCCKTEWDVKDMYEHFWETGMQYGPTFANLCDVRCTSNKCIGKVKVPDTAAVMPMKHEAPFIIHPGTLDSIIQTYLPALVQAGHLKSATIPVAIESMFISRNVTRQAGDLLTSYASSTRKDYRYFSTSMSVFADGPSSENQLVITIDDMTLVALDRPNSSEESGEALPLAFNLHWKPDVDMLTEEQLVEMINASTKVKDHIAAKKMKQTAAQLGKEILARVPFEQAQVVGESSRHLWKLLHASLESLSTPDHRGALDEISSLKNVDSTLAQAADRLSNVLTGRVAPSDVASMYDLMEAVRIPELYDNNLPTATYLHLLGHKKPSLRVLTVGPQSGPTSLNLLMLLAELGGGEIPFAVLHHSDAELNIDQTVRSRFPSWADSVGFRDVFNESGASQQNPPIVNETYDIVVAFNVLGSSPGFSKTLSAAAPLLNARGKILLVDNSHKSPMAALVWGPLPSFLSTWVDEKSADSPDVDCAVQSMGYDIYARLCPNVTVIQRAAQVQKAEKTIGLDVLVVTDGEPAGVDLQQLQTLCEDQYAEVHVASLEHARPRPGQACIVLSELSRPVLAAPTAAEWEAVKRITDTCSGIVWVTRGAADNVCSNPQVSLIQGFARTVRAEAGDKPITTLDLDNDKVLSAQAAAAYIAAVFQRMMQGGEDIDVELQERRGILHVARLIEDGDAAKQLQGEATAMELRLDQAGPCRLFAGTPGLLDSLHFTVDDRVQESLETGQIEVQVHATGINFKDVMMAMGQIAVEDLGCECSGVVSAVGDGVVGLRVGDRVACMGPGSFCTQLRVDARLAHRIPHHMELETAAALPITYVTAYHSIHNIAHLRHGETILIHAAAGGLGQALVELSQLVGARVLVTVGSTEKKRLIMQRFRLSEEDILFSRDTSFVHDVMRLTNGRGVDVIMNSLAGESLRQSWTCIAPNGRFVELGQRDITVNSRLDMAPFARNVSFTAYNLAYMLRHDPQAAHEVLAEVLALYDQGKLRGPEPLEKCTFSQLGNAFRKIQTGRHMGKMVAVANPDDMVWYKPPPASRRTLFRPDASYLLVGGVGGLGSATALWMSTRGARHLLLLNRSGADTEAARTTLATLRANGCTATVLACDVADKAQLSSVLAEARSNWPPIRGVIQGAMVLRDSMLANMTLEDYMAVVRPKVQGTWNLQTHLPADLDFFILESSISGIIGNPGQAAYAAANTFLDAFARWRRARCQPATVIDIGAVHGIGYLERNVDVKLSMERQGFAFTDEQLLMRLLEFAISHSSREPHRAQIVTGLGPWHPDTSLPGLNAPLFSRYRMLSCQNSTGSTDVDTLRGILAQSSSFDSAVTIVLSALVDQVVSRTEIPIENVHTTKSLQDYGIDSLVAVELRNWLIKDMDSVVPMLELLGAESLSALAVKIAARSQLISTNNRG.

The Ketosynthase family 3 (KS3) domain maps to 11 to 436 (ITPIAVVGMS…GANVHAILES (426 aa)). Catalysis depends on for beta-ketoacyl synthase activity residues C186, H321, and H359. Residues 573–868 (FVFTGQGAQW…LGGPISQVID (296 aa)) form a malonyl-CoA:ACP transacylase (MAT) region. The tract at residues 954–1092 (LDLIGVFDVH…GLISVLKSSK (139 aa)) is N-terminal hotdog fold. Positions 954 to 1278 (LDLIGVFDVH…LVALDRPNSS (325 aa)) constitute a PKS/mFAS DH domain. The segment at 956–1277 (LIGVFDVHSS…TLVALDRPNS (322 aa)) is dehydratase (DH) domain. Residue H986 is the Proton acceptor; for dehydratase activity of the active site. The segment at 1122 to 1278 (KTEWDVKDMY…LVALDRPNSS (157 aa)) is C-terminal hotdog fold. D1187 (proton donor; for dehydratase activity) is an active-site residue. The tract at residues 1827–2139 (GLLDSLHFTV…TGRHMGKMVA (313 aa)) is enoyl reductase (ER) domain. Residues 2164-2341 (ASYLLVGGVG…ATVIDIGAVH (178 aa)) are ketoreductase (KR) domain. A Carrier domain is found at 2442–2519 (SAVTIVLSAL…ALAVKIAARS (78 aa)). O-(pantetheine 4'-phosphoryl)serine is present on S2479.

The protein operates within mycotoxin biosynthesis. Functionally, reducing polyketide synthase (PKS); part of the Tox1A locus, one of the 2 loci that mediate the biosynthesis of T-toxin, a family of linear polyketides 37 to 45 carbons in length, of which the major component is 41 carbons, and which leads to high virulence to maize. One of the PKSs (PKS1 or PKS2) could synthesize a precursor, used subsequently by the other PKS as starter unit, to add additional carbons. Variability in the length of the final carbon backbone C35-47 could be achieved by varying the number of condensation cycles, or use of different starter or extender units or might be due to decarboxylation of the penultimate product, catalyzed by DEC1. Additional proteins are required for the biosynthesis of T-toxin, including oxidoreductases RED1, RED2, RED3, LAM1 and OXI1, as well as esterase TOX9. This is Reducing polyketide synthase PKS1 from Cochliobolus heterostrophus (strain C4 / ATCC 48331 / race T) (Southern corn leaf blight fungus).